Reading from the N-terminus, the 53-residue chain is Large ribosomal subunit protein bL32c (53 aa).

It belongs to the bacterial ribosomal protein bL32 family.

The protein localises to the plastid. Its subcellular location is the chloroplast. This chain is Large ribosomal subunit protein bL32c (rpl32), found in Guillardia theta (Cryptophyte).